The sequence spans 601 residues: Methionine--tRNA ligase (601 aa).

The short motif at 21–31 (PYANGPRHIGH) is the 'HIGH' region element. Cys-153, Cys-156, Cys-166, and Cys-169 together coordinate Zn(2+). Asn-361 serves as a coordination point for ATP.

It belongs to the class-I aminoacyl-tRNA synthetase family. MetG type 1 subfamily. In terms of assembly, monomer. Zn(2+) is required as a cofactor.

Its subcellular location is the cytoplasm. It catalyses the reaction tRNA(Met) + L-methionine + ATP = L-methionyl-tRNA(Met) + AMP + diphosphate. Its function is as follows. Is required not only for elongation of protein synthesis but also for the initiation of all mRNA translation through initiator tRNA(fMet) aminoacylation. This Cutibacterium acnes (strain DSM 16379 / KPA171202) (Propionibacterium acnes) protein is Methionine--tRNA ligase.